Reading from the N-terminus, the 359-residue chain is MFAKLENLEQKFIEIECSLAQPNIFNDQEQYRKLTKTHSDLKPIVTTFQQFKKLQQQLSENKELISDIDPDIQEMALEEIKKLELELTHLEYELKILLLPKDPLDEKNILLEIRAGTGGEEAALFAADLFRMYCRYAEKMHWKVEIMSQSDSDTGGFKEIIALIQGDNVYSRLKFESGTHRVQRVPTTESQGRIHTSAATVAVLPEAEDVDIEIRPEELRFDVFRSSGPGGQSVNTTDSAVRVTHIPTGIVVTCQDEKSQHKNKAKALKVLSSRLLQIKQEQQEIEQADARRALVGSGDRSERIRTYNFPQGRVTDHRINLTLYSLIKVMEGEIQEFIDALSTHAQTEALKMQATQIAS.

Q232 carries the post-translational modification N5-methylglutamine.

It belongs to the prokaryotic/mitochondrial release factor family. Post-translationally, methylated by PrmC. Methylation increases the termination efficiency of RF1.

The protein localises to the cytoplasm. Peptide chain release factor 1 directs the termination of translation in response to the peptide chain termination codons UAG and UAA. This chain is Peptide chain release factor 1, found in Lawsonia intracellularis (strain PHE/MN1-00).